The primary structure comprises 428 residues: Enolase (428 aa).

Gln163 provides a ligand contact to (2R)-2-phosphoglycerate. Glu205 serves as the catalytic Proton donor. Residues Asp242, Glu285, and Asp312 each contribute to the Mg(2+) site. (2R)-2-phosphoglycerate contacts are provided by Lys337, Arg366, Ser367, and Lys388. Lys337 (proton acceptor) is an active-site residue.

This sequence belongs to the enolase family. Mg(2+) serves as cofactor.

It is found in the cytoplasm. Its subcellular location is the secreted. The protein resides in the cell surface. It catalyses the reaction (2R)-2-phosphoglycerate = phosphoenolpyruvate + H2O. It functions in the pathway carbohydrate degradation; glycolysis; pyruvate from D-glyceraldehyde 3-phosphate: step 4/5. Its function is as follows. Catalyzes the reversible conversion of 2-phosphoglycerate (2-PG) into phosphoenolpyruvate (PEP). It is essential for the degradation of carbohydrates via glycolysis. In Neisseria meningitidis serogroup B (strain ATCC BAA-335 / MC58), this protein is Enolase.